The primary structure comprises 203 residues: Thymidylate kinase (203 aa).

7-14 (GGEGAGKT) provides a ligand contact to ATP.

This sequence belongs to the thymidylate kinase family.

The catalysed reaction is dTMP + ATP = dTDP + ADP. Its function is as follows. Phosphorylation of dTMP to form dTDP in both de novo and salvage pathways of dTTP synthesis. The chain is Thymidylate kinase (tmk) from Chlamydia muridarum (strain MoPn / Nigg).